Here is an 804-residue protein sequence, read N- to C-terminus: Leucine--tRNA ligase (804 aa).

A 'HIGH' region motif is present at residues 40–51 (PYPSGAGLHVGH). Positions 576–580 (KMSKS) match the 'KMSKS' region motif. K579 contributes to the ATP binding site.

This sequence belongs to the class-I aminoacyl-tRNA synthetase family.

It is found in the cytoplasm. The enzyme catalyses tRNA(Leu) + L-leucine + ATP = L-leucyl-tRNA(Leu) + AMP + diphosphate. This chain is Leucine--tRNA ligase, found in Bacillus pumilus (strain SAFR-032).